Consider the following 218-residue polypeptide: Glutathione S-transferase Mu 1 (218 aa).

One can recognise a GST N-terminal domain in the interval 2-88 (PMILGYWDIR…YIARKHNLCG (87 aa)). 7-8 (YW) is a glutathione binding site. Residue threonine 34 is modified to Phosphothreonine. Residues 43–46 (RSQW), lysine 50, 59–60 (NL), and 72–73 (QS) contribute to the glutathione site. Positions 90 to 208 (TEEEKIRVDI…KSSRFLPRPV (119 aa)) constitute a GST C-terminal domain. Residue tyrosine 116 coordinates substrate. Serine 210 carries the post-translational modification Phosphoserine.

The protein belongs to the GST superfamily. Mu family. In terms of assembly, homodimer. As to expression, liver (at protein level).

Its subcellular location is the cytoplasm. It catalyses the reaction RX + glutathione = an S-substituted glutathione + a halide anion + H(+). The enzyme catalyses prostaglandin A2 + glutathione = prostaglandin A2-S-(R)-glutathione. It carries out the reaction prostaglandin J2 + glutathione = prostaglandin J2-S-(R)-glutathione. The catalysed reaction is prostaglandin J2 + glutathione = prostaglandin J2-S-(S)-glutathione. It catalyses the reaction prostaglandin A2 + glutathione = prostaglandin A2-S-(S)-glutathione. The enzyme catalyses 11(S)-hydroxy-14(S),15(S)-epoxy-(5Z,8Z,12E)-eicosatrienoate + glutathione = (11S,15S)-dihydroxy-14(R)-S-glutathionyl-(5Z,8Z,12E)-eicosatrienoate. Functionally, conjugation of reduced glutathione to a wide number of exogenous and endogenous hydrophobic electrophiles. Involved in the formation of glutathione conjugates of both prostaglandin A2 (PGA2) and prostaglandin J2 (PGJ2). Participates in the formation of novel hepoxilin regioisomers. The protein is Glutathione S-transferase Mu 1 of Homo sapiens (Human).